Here is a 173-residue protein sequence, read N- to C-terminus: Crossover junction endodeoxyribonuclease RuvC (173 aa).

Active-site residues include aspartate 8, glutamate 67, and aspartate 139. Mg(2+) contacts are provided by aspartate 8, glutamate 67, and aspartate 139.

It belongs to the RuvC family. As to quaternary structure, homodimer which binds Holliday junction (HJ) DNA. The HJ becomes 2-fold symmetrical on binding to RuvC with unstacked arms; it has a different conformation from HJ DNA in complex with RuvA. In the full resolvosome a probable DNA-RuvA(4)-RuvB(12)-RuvC(2) complex forms which resolves the HJ. Requires Mg(2+) as cofactor.

The protein resides in the cytoplasm. It carries out the reaction Endonucleolytic cleavage at a junction such as a reciprocal single-stranded crossover between two homologous DNA duplexes (Holliday junction).. In terms of biological role, the RuvA-RuvB-RuvC complex processes Holliday junction (HJ) DNA during genetic recombination and DNA repair. Endonuclease that resolves HJ intermediates. Cleaves cruciform DNA by making single-stranded nicks across the HJ at symmetrical positions within the homologous arms, yielding a 5'-phosphate and a 3'-hydroxyl group; requires a central core of homology in the junction. The consensus cleavage sequence is 5'-(A/T)TT(C/G)-3'. Cleavage occurs on the 3'-side of the TT dinucleotide at the point of strand exchange. HJ branch migration catalyzed by RuvA-RuvB allows RuvC to scan DNA until it finds its consensus sequence, where it cleaves and resolves the cruciform DNA. The protein is Crossover junction endodeoxyribonuclease RuvC of Vibrio campbellii (strain ATCC BAA-1116).